A 660-amino-acid chain; its full sequence is Polyadenylate-binding protein 3 (660 aa).

4 consecutive RRM domains span residues 49-126 (SSLY…LSNR), 136-213 (GNIF…HFIR), 229-306 (TNVY…RAQK), and 332-409 (ANLY…LAQR). The region spanning 571-648 (PISKLTSSLA…ALDVLRLSVD (78 aa)) is the PABC domain.

Belongs to the polyadenylate-binding protein type-1 family. In terms of tissue distribution, expressed predominantly in immature flowers. Detected in tapetum and pollen. Strongly expressed in immatures siliques.

The protein resides in the cytoplasm. It is found in the nucleus. Binds the poly(A) tail of mRNA. Appears to be an important mediator of the multiple roles of the poly(A) tail in mRNA biogenesis, stability and translation. In the cytoplasm, affects both translation and mRNA decay. Inhibits the polyadenylated RNA degradation by the Rrp41p 3'--&gt;5' exonuclease in vitro. Binds with the 5'UTRs of PAB2, PAB3 and with a lower affinity with the 5'UTR of PAB5. In Arabidopsis thaliana (Mouse-ear cress), this protein is Polyadenylate-binding protein 3 (PAB3).